A 142-amino-acid chain; its full sequence is MAKKVAGQLKLQVPAGAANPSPPIGPALGQRGINIMEFCKAFNAASQEMEKGSPIPVLITYYQDKSFTFVMKTPPVTYFLKKAANLKSGSKTPGKASAGTITRDKVRAIAEAKMKDLNAADVEAAMRMIEGSARSMGLEVVG.

It belongs to the universal ribosomal protein uL11 family. As to quaternary structure, part of the ribosomal stalk of the 50S ribosomal subunit. Interacts with L10 and the large rRNA to form the base of the stalk. L10 forms an elongated spine to which L12 dimers bind in a sequential fashion forming a multimeric L10(L12)X complex. In terms of processing, one or more lysine residues are methylated.

In terms of biological role, forms part of the ribosomal stalk which helps the ribosome interact with GTP-bound translation factors. The polypeptide is Large ribosomal subunit protein uL11 (Brucella abortus (strain S19)).